The chain runs to 249 residues: Mitochondrial intermembrane space import and assembly protein 40 (249 aa).

A mitochondrion-targeting transit peptide spans 1-22 (MYRLATRRVLAQTTQTFSKRTF). The Mitochondrial matrix segment spans residues 23 to 36 (SNQGFRAAKASKTN). A helical; Signal-anchor for type II membrane protein transmembrane segment spans residues 37-55 (MYLGAGIALIPVIMSINYL). Topologically, residues 56–249 (NGNHIANEVD…KAKAEDSNTK (194 aa)) are mitochondrial intermembrane. Residues 95–127 (KADVKTKVPAEEANPETRTETDKPSEESQKDEE) are compositionally biased toward basic and acidic residues. The segment at 95–136 (KADVKTKVPAEEANPETRTETDKPSEESQKDEENSYEGAAYN) is disordered. 3 disulfides stabilise this stretch: cysteine 146/cysteine 148, cysteine 157/cysteine 190, and cysteine 167/cysteine 180. In terms of domain architecture, CHCH spans 154-198 (HGPCGEEFKEAFACFIYSESEPKGIECIKKFESMRNCFREHPEHY). 2 consecutive short sequence motifs (cx9C motif) follow at residues 157–167 (CGEEFKEAFAC) and 180–190 (CIKKFESMRNC). The interval 202 to 249 (LYDDEEQEPLVDVNEKKGDASEQSAETIADDATKVVKEKAKAEDSNTK) is disordered. Residues 232–249 (DATKVVKEKAKAEDSNTK) show a composition bias toward basic and acidic residues.

As to quaternary structure, monomer. Cu(2+) is required as a cofactor. Zn(2+) serves as cofactor.

The protein localises to the mitochondrion inner membrane. Its function is as follows. Required for the import and folding of small cysteine-containing proteins (small Tim) in the mitochondrial intermembrane space (IMS). Forms a redox cycle with ERV1 that involves a disulfide relay system. Precursor proteins to be imported into the IMS are translocated in their reduced form into the mitochondria. The oxidized form of MIA40 forms a transient intermolecular disulfide bridge with the reduced precursor protein, resulting in oxidation of the precursor protein that now contains an intramolecular disulfide bond and is able to undergo folding in the IMS. The sequence is that of Mitochondrial intermembrane space import and assembly protein 40 (MIA40) from Debaryomyces hansenii (strain ATCC 36239 / CBS 767 / BCRC 21394 / JCM 1990 / NBRC 0083 / IGC 2968) (Yeast).